Reading from the N-terminus, the 258-residue chain is Small ribosomal subunit protein mS40 (258 aa).

The N-terminal 35 residues, 1-35, are a transit peptide targeting the mitochondrion; sequence MAASVLNTLLRRLPMLSLFRGAHRVQVPLQTLCTK. Ser-38 and Ser-49 each carry phosphoserine. The disordered stretch occupies residues 218–258; it reads RLYQGHLREESGPPPESMPKMPPTAPAEASFTGQTDPQSAL. Pro residues predominate over residues 229 to 242; that stretch reads GPPPESMPKMPPTA. Residues 248-258 show a composition bias toward polar residues; it reads FTGQTDPQSAL.

It belongs to the bacterial ribosomal protein bS18 family. Mitochondrion-specific ribosomal protein mS40 subfamily. Component of the mitochondrial ribosome small subunit (28S) which comprises a 12S rRNA and about 30 distinct proteins.

The protein localises to the mitochondrion. The chain is Small ribosomal subunit protein mS40 (MRPS18B) from Macaca mulatta (Rhesus macaque).